The primary structure comprises 226 residues: ATP synthase subunit a (226 aa).

A run of 5 helical transmembrane segments spans residues 18–38 (LSLN…TYWL), 74–94 (FVSL…PYIF), 100–120 (LTLT…YGWI), 162–182 (LTAN…TGPM), and 187–207 (IILS…SAVA).

Belongs to the ATPase A chain family. As to quaternary structure, F-type ATPases have 2 components, CF(1) - the catalytic core - and CF(0) - the membrane proton channel. CF(1) has five subunits: alpha(3), beta(3), gamma(1), delta(1), epsilon(1). CF(0) has three main subunits: a, b and c.

It localises to the mitochondrion inner membrane. Mitochondrial membrane ATP synthase (F(1)F(0) ATP synthase or Complex V) produces ATP from ADP in the presence of a proton gradient across the membrane which is generated by electron transport complexes of the respiratory chain. F-type ATPases consist of two structural domains, F(1) - containing the extramembraneous catalytic core and F(0) - containing the membrane proton channel, linked together by a central stalk and a peripheral stalk. During catalysis, ATP synthesis in the catalytic domain of F(1) is coupled via a rotary mechanism of the central stalk subunits to proton translocation. Key component of the proton channel; it may play a direct role in the translocation of protons across the membrane. The chain is ATP synthase subunit a from Aedes aegypti (Yellowfever mosquito).